A 369-amino-acid polypeptide reads, in one-letter code: Queuine tRNA-ribosyltransferase (369 aa).

The active-site Proton acceptor is the D89. Substrate contacts are provided by residues 89–93 (DSGGF), D142, Q184, and G211. Residues 242 to 248 (GGGSPEL) are RNA binding. Residue D261 is the Nucleophile of the active site. Residues 266 to 270 (TRIAR) are RNA binding; important for wobble base 34 recognition. Zn(2+) contacts are provided by C299, C301, C304, and H330.

This sequence belongs to the queuine tRNA-ribosyltransferase family. Homodimer. Within each dimer, one monomer is responsible for RNA recognition and catalysis, while the other monomer binds to the replacement base PreQ1. Zn(2+) serves as cofactor.

It catalyses the reaction 7-aminomethyl-7-carbaguanine + guanosine(34) in tRNA = 7-aminomethyl-7-carbaguanosine(34) in tRNA + guanine. The protein operates within tRNA modification; tRNA-queuosine biosynthesis. Functionally, catalyzes the base-exchange of a guanine (G) residue with the queuine precursor 7-aminomethyl-7-deazaguanine (PreQ1) at position 34 (anticodon wobble position) in tRNAs with GU(N) anticodons (tRNA-Asp, -Asn, -His and -Tyr). Catalysis occurs through a double-displacement mechanism. The nucleophile active site attacks the C1' of nucleotide 34 to detach the guanine base from the RNA, forming a covalent enzyme-RNA intermediate. The proton acceptor active site deprotonates the incoming PreQ1, allowing a nucleophilic attack on the C1' of the ribose to form the product. After dissociation, two additional enzymatic reactions on the tRNA convert PreQ1 to queuine (Q), resulting in the hypermodified nucleoside queuosine (7-(((4,5-cis-dihydroxy-2-cyclopenten-1-yl)amino)methyl)-7-deazaguanosine). The polypeptide is Queuine tRNA-ribosyltransferase (Thermotoga sp. (strain RQ2)).